The primary structure comprises 265 residues: Indole-3-glycerol phosphate synthase (265 aa).

It belongs to the TrpC family.

The catalysed reaction is 1-(2-carboxyphenylamino)-1-deoxy-D-ribulose 5-phosphate + H(+) = (1S,2R)-1-C-(indol-3-yl)glycerol 3-phosphate + CO2 + H2O. The protein operates within amino-acid biosynthesis; L-tryptophan biosynthesis; L-tryptophan from chorismate: step 4/5. This chain is Indole-3-glycerol phosphate synthase, found in Hyphomonas neptunium (strain ATCC 15444).